Reading from the N-terminus, the 123-residue chain is Small ribosomal subunit protein uS12 (123 aa).

Asp89 bears the 3-methylthioaspartic acid mark. A disordered region spans residues Gly100–Lys123. The span at Asn111 to Lys123 shows a compositional bias: basic residues.

This sequence belongs to the universal ribosomal protein uS12 family. Part of the 30S ribosomal subunit. Contacts proteins S8 and S17. May interact with IF1 in the 30S initiation complex.

In terms of biological role, with S4 and S5 plays an important role in translational accuracy. Interacts with and stabilizes bases of the 16S rRNA that are involved in tRNA selection in the A site and with the mRNA backbone. Located at the interface of the 30S and 50S subunits, it traverses the body of the 30S subunit contacting proteins on the other side and probably holding the rRNA structure together. The combined cluster of proteins S8, S12 and S17 appears to hold together the shoulder and platform of the 30S subunit. This Pseudomonas fluorescens (strain ATCC BAA-477 / NRRL B-23932 / Pf-5) protein is Small ribosomal subunit protein uS12.